The primary structure comprises 359 residues: Bergaptol O-methyltransferase (359 aa).

Bergaptol is bound at residue histidine 126. The S-adenosyl-L-homocysteine site is built by serine 179, glycine 203, aspartate 226, aspartate 246, and lysine 260. Histidine 264 is a bergaptol binding site. Histidine 264 (proton acceptor) is an active-site residue.

This sequence belongs to the class I-like SAM-binding methyltransferase superfamily. Cation-independent O-methyltransferase family. COMT subfamily. As to quaternary structure, homodimer. As to expression, mostly expressed in roots and, to a lower extent, in stems and leaves.

The protein localises to the cytoplasm. It catalyses the reaction bergaptol + S-adenosyl-L-methionine = bergapten + S-adenosyl-L-homocysteine. Its pathway is aromatic compound metabolism. It functions in the pathway secondary metabolite biosynthesis. In terms of biological role, O-methyltransferase involved in the biosynthesis of furocoumarins natural products such as bergapten, a photosensitizer used for medical purpose such as treating psoriasis and vitiligo or facilitating resistance to microbial infection and other stresses. Catalyzes specifically the methylation of bergaptol. Not active on xanthotol, isoscopoletin, scopoletin and esculetin. This chain is Bergaptol O-methyltransferase, found in Kitagawia praeruptora (Peucedanum praeruptorum).